Consider the following 718-residue polypeptide: GMP synthase [glutamine-hydrolyzing] (718 aa).

Residues 43–247 (VIVILDAGSQ…LIDICGCSAN (205 aa)) enclose the Glutamine amidotransferase type-1 domain. Active-site for GATase activity residues include Cys-128, His-221, and Glu-223. The GMPS ATP-PPase domain maps to 248–457 (YTLDDREQQA…LGLSDSLVWR (210 aa)). 275-281 (SGGVDST) lines the ATP pocket.

In terms of assembly, homodimer.

The enzyme catalyses XMP + L-glutamine + ATP + H2O = GMP + L-glutamate + AMP + diphosphate + 2 H(+). It functions in the pathway purine metabolism; GMP biosynthesis; GMP from XMP (L-Gln route): step 1/1. The chain is GMP synthase [glutamine-hydrolyzing] (guaA) from Dictyostelium discoideum (Social amoeba).